The chain runs to 465 residues: Pancreatic triacylglycerol lipase (465 aa).

An N-terminal signal peptide occupies residues 1–16; it reads MLMLWTFAVLLGAVAG. 2 disulfides stabilise this stretch: C20–C26 and C107–C118. The active-site Nucleophile is S169. The active-site Charge relay system is D193. 4 residues coordinate Ca(2+): E204, R207, D209, and D212. C254 and C278 form a disulfide bridge. The Charge relay system role is filled by H280. 3 disulfides stabilise this stretch: C302/C313, C316/C321, and C449/C465. The region spanning 355-465 is the PLAT domain; it reads WRYQVTVTLS…EDVLLTLSPC (111 aa).

It belongs to the AB hydrolase superfamily. Lipase family. Forms a 1:1 stoichiometric complex with (pro)colipase/CLPS. Pancreas.

The protein resides in the secreted. It carries out the reaction a triacylglycerol + H2O = a diacylglycerol + a fatty acid + H(+). The enzyme catalyses 1,2,3-tri-(9Z-octadecenoyl)-glycerol + H2O = di-(9Z)-octadecenoylglycerol + (9Z)-octadecenoate + H(+). It catalyses the reaction 1,2,3-tributanoylglycerol + H2O = dibutanoylglycerol + butanoate + H(+). The catalysed reaction is all-trans-retinyl hexadecanoate + H2O = all-trans-retinol + hexadecanoate + H(+). It carries out the reaction 1,2-di-(9Z-octadecenoyl)-glycerol + H2O = (9Z-octadecenoyl)-glycerol + (9Z)-octadecenoate + H(+). With respect to regulation, inhibited by bile salts, is reactivated by (pro)colipase/CLPS. Its function is as follows. Plays an important role in fat metabolism. It preferentially splits the esters of long-chain fatty acids at positions 1 and 3, producing mainly 2-monoacylglycerol and free fatty acids, and shows considerably higher activity against insoluble emulsified substrates than against soluble ones. In Mus musculus (Mouse), this protein is Pancreatic triacylglycerol lipase.